The chain runs to 233 residues: uncharacterized protein (233 aa).

A helical transmembrane segment spans residues 21–41 (LNILIAIVSILIVVVAANLFI). Residues 44 to 163 (PSSKDVSKDS…GEHAATYDSS (120 aa)) are disordered. Composition is skewed to basic and acidic residues over residues 48-57 (DVSKDSETAQ), 66-108 (KTEK…KKDD), and 135-144 (DVEKTYENPD).

It is found in the cell membrane. This is an uncharacterized protein from Bacillus subtilis (strain 168).